The sequence spans 179 residues: MLRFKELYQQKIIENLQKKFSYKNKHEIPQIKKIVINMGVGEATANSKVINNAVNDLTLISGQKPVVTLARKSIATFKLRENMKIGCKVTLRKDRMYDFLERLVIVALPRVKEFRGFSYKSFDGKGNFTFGLKEQIVFPEINYDKIDTIRGMDITIVTSAKTDQESKFLLSGFNLPFYN.

This sequence belongs to the universal ribosomal protein uL5 family. As to quaternary structure, part of the 50S ribosomal subunit; part of the 5S rRNA/L5/L18/L25 subcomplex. Contacts the 5S rRNA and the P site tRNA. Forms a bridge to the 30S subunit in the 70S ribosome.

In terms of biological role, this is one of the proteins that bind and probably mediate the attachment of the 5S RNA into the large ribosomal subunit, where it forms part of the central protuberance. In the 70S ribosome it contacts protein S13 of the 30S subunit (bridge B1b), connecting the 2 subunits; this bridge is implicated in subunit movement. Contacts the P site tRNA; the 5S rRNA and some of its associated proteins might help stabilize positioning of ribosome-bound tRNAs. This is Large ribosomal subunit protein uL5 from Rickettsia rickettsii (strain Iowa).